Here is a 274-residue protein sequence, read N- to C-terminus: MSLQAVIEAAFERRAEITPKTVDVETRVAIETVIEKLDSGEYRVAEKIGGEWVTHQWLKKAVLLSFRINDNQIIDGAETKYYDKVALKFADYTESRFAEEGFRVVPSATVRKGAYIAKNCVLMPSYVNIGAYVGEGTMVDTWATVGSCAQIGKNVHLSGGVGIGGVLEPLQANPTIIGDNCFIGARSEVVEGVIVEEGCVISMGVFIGQSTRIYDRETGEIHYGRVPAGSVVVSGSLPSKCGKYSLYCAVIVKKVDAKTLGKVGINELLRTIEE.

Residues R103 and D140 each contribute to the substrate site.

Belongs to the transferase hexapeptide repeat family. In terms of assembly, homotrimer.

Its subcellular location is the cytoplasm. The enzyme catalyses (S)-2,3,4,5-tetrahydrodipicolinate + succinyl-CoA + H2O = (S)-2-succinylamino-6-oxoheptanedioate + CoA. It participates in amino-acid biosynthesis; L-lysine biosynthesis via DAP pathway; LL-2,6-diaminopimelate from (S)-tetrahydrodipicolinate (succinylase route): step 1/3. The sequence is that of 2,3,4,5-tetrahydropyridine-2,6-dicarboxylate N-succinyltransferase from Haemophilus ducreyi (strain 35000HP / ATCC 700724).